Consider the following 239-residue polypeptide: uncharacterized protein (239 aa).

It belongs to the initiator RepB protein family.

Its function is as follows. Mutations in ORF 239 affects the incN plasmid pUC1 E.coli polA-independence but not its autonomous replication ability. This is an uncharacterized protein from Escherichia coli.